The chain runs to 209 residues: Imidazole glycerol phosphate synthase subunit HisH (209 aa).

The 205-residue stretch at 1–205 (MIAIIDYGMG…KGVVETWKSS (205 aa)) folds into the Glutamine amidotransferase type-1 domain. Residue Cys-79 is the Nucleophile of the active site. Residues His-180 and Glu-182 contribute to the active site.

Heterodimer of HisH and HisF.

The protein resides in the cytoplasm. It catalyses the reaction 5-[(5-phospho-1-deoxy-D-ribulos-1-ylimino)methylamino]-1-(5-phospho-beta-D-ribosyl)imidazole-4-carboxamide + L-glutamine = D-erythro-1-(imidazol-4-yl)glycerol 3-phosphate + 5-amino-1-(5-phospho-beta-D-ribosyl)imidazole-4-carboxamide + L-glutamate + H(+). The catalysed reaction is L-glutamine + H2O = L-glutamate + NH4(+). The protein operates within amino-acid biosynthesis; L-histidine biosynthesis; L-histidine from 5-phospho-alpha-D-ribose 1-diphosphate: step 5/9. Its function is as follows. IGPS catalyzes the conversion of PRFAR and glutamine to IGP, AICAR and glutamate. The HisH subunit catalyzes the hydrolysis of glutamine to glutamate and ammonia as part of the synthesis of IGP and AICAR. The resulting ammonia molecule is channeled to the active site of HisF. This Bacillus thuringiensis subsp. konkukian (strain 97-27) protein is Imidazole glycerol phosphate synthase subunit HisH.